We begin with the raw amino-acid sequence, 448 residues long: MGKYFGTDGVRGVANSELTPELAFKVGRFGGYVLTKDKQRPKVLIGRDTRISGHMLEGALVAGLLSIGAEVMRLGVISTPGVSYLTKAMDAEAGVMISASHNPVQDNGIKFFGGDGFKLSDEQEAEIERLMDEPEDKLPRPTGADLGLVNDYFEGVQKYLQFLKQTADEDFTGIHVALDCAHGATSSIATHLFADLDADVSTMGTSPNGLNINDGVGSTHPEALSAFVKEKNADIGLAFDGDGDRLIAVDEKGNIVDGDQIMYICAKYLKSEGRLKDDTVVSTVMSNLGFYKALEKEEIKSVQTAVGDRYVVEAMKKDGYNVGGEQSGHLIFLDYNTTGDGLLSAIMLVNTLKASGKTLSELADEMKKFPQLLVNVKVTDKYKVEENAKVKAVISEVEKEMNGDGRILVRPSGTEPLVRVMAEARTKELCDEYVTKIVDVVRTEMGAE.

Residue Ser100 is the Phosphoserine intermediate of the active site. Residues Ser100, Asp240, Asp242, and Asp244 each coordinate Mg(2+). Residue Ser100 is modified to Phosphoserine.

This sequence belongs to the phosphohexose mutase family. Requires Mg(2+) as cofactor. Post-translationally, activated by phosphorylation.

The enzyme catalyses alpha-D-glucosamine 1-phosphate = D-glucosamine 6-phosphate. Its function is as follows. Catalyzes the conversion of glucosamine-6-phosphate to glucosamine-1-phosphate. The polypeptide is Phosphoglucosamine mutase (Bacillus velezensis (strain DSM 23117 / BGSC 10A6 / LMG 26770 / FZB42) (Bacillus amyloliquefaciens subsp. plantarum)).